The sequence spans 128 residues: Sulfurtransferase TusD (128 aa).

C78 acts as the Cysteine persulfide intermediate in catalysis.

The protein belongs to the DsrE/TusD family. Heterohexamer, formed by a dimer of trimers. The hexameric TusBCD complex contains 2 copies each of TusB, TusC and TusD. The TusBCD complex interacts with TusE.

The protein localises to the cytoplasm. Its function is as follows. Part of a sulfur-relay system required for 2-thiolation of 5-methylaminomethyl-2-thiouridine (mnm(5)s(2)U) at tRNA wobble positions. Accepts sulfur from TusA and transfers it in turn to TusE. In Salmonella agona (strain SL483), this protein is Sulfurtransferase TusD.